The following is a 379-amino-acid chain: Retron Se72 reverse transcriptase (379 aa).

The 245-residue stretch at 1–245 (MNKPRFNGTP…SKLSVTGLWV (245 aa)) folds into the Reverse transcriptase domain. Mg(2+)-binding residues include aspartate 109, aspartate 188, and aspartate 189.

It belongs to the bacterial reverse transcriptase family.

The enzyme catalyses DNA(n) + a 2'-deoxyribonucleoside 5'-triphosphate = DNA(n+1) + diphosphate. In terms of biological role, reverse transcriptase (RT) component of antiviral defense system retron Se72, composed of a non-coding RNA (ncRNA), this reverse transcriptase (RT) and the following cold shock-like protein. Expression of retron Se72 confers protection against bacteriophage lambda. At multiplicity of infection (MOI) of 0.02 cultures slow growth when infected with lambda but do not collapse, at MOI 2 cultures enter growth stasis. Responsible for synthesis of msDNA (a branched molecule with RNA linked by a 2',5'-phosphodiester bond to ssDNA). The retron transcript serves as primer (from a conserved internal G residue) and template for the reaction, and codes for the RT. The DNA segment is predicted to be 72 bases long. This is Retron Se72 reverse transcriptase from Salmonella heidelberg (strain 579083-10).